A 327-amino-acid chain; its full sequence is DNA-directed RNA polymerase subunit alpha (327 aa).

Residues 1-233 (MVREKVKVST…NLFIPFLHVE (233 aa)) form an alpha N-terminal domain (alpha-NTD) region. Positions 267 to 327 (LAFQYIFIDQ…KKILDILEKK (61 aa)) are alpha C-terminal domain (alpha-CTD).

It belongs to the RNA polymerase alpha chain family. As to quaternary structure, in plastids the minimal PEP RNA polymerase catalytic core is composed of four subunits: alpha, beta, beta', and beta''. When a (nuclear-encoded) sigma factor is associated with the core the holoenzyme is formed, which can initiate transcription.

The protein localises to the plastid. Its subcellular location is the chloroplast. The enzyme catalyses RNA(n) + a ribonucleoside 5'-triphosphate = RNA(n+1) + diphosphate. In terms of biological role, DNA-dependent RNA polymerase catalyzes the transcription of DNA into RNA using the four ribonucleoside triphosphates as substrates. The sequence is that of DNA-directed RNA polymerase subunit alpha from Nasturtium officinale (Watercress).